Reading from the N-terminus, the 205-residue chain is Protease (205 aa).

Residues H55, D72, and C122 contribute to the active site.

This sequence belongs to the peptidase C5 family. As to quaternary structure, interacts with protease cofactor pVI-C; this interaction is necessary for protease activation.

The protein localises to the virion. The protein resides in the host nucleus. It catalyses the reaction Cleaves proteins of the adenovirus and its host cell at two consensus sites: -Yaa-Xaa-Gly-Gly-|-Xaa- and -Yaa-Xaa-Gly-Xaa-|-Gly- (in which Yaa is Met, Ile or Leu, and Xaa is any amino acid).. Requires DNA and protease cofactor for maximal activation. Inside nascent virions, becomes partially activated by binding to the viral DNA, allowing it to cleave the cofactor that binds to the protease and fully activates it. Actin, like the viral protease cofactor, seems to act as a cofactor in the cleavage of cytokeratin 18 and of actin itself. In terms of biological role, cleaves viral precursor proteins (pTP, pIIIa, pVI, pVII, pVIII, and pX) inside newly assembled particles giving rise to mature virions. Protease complexed to its cofactor slides along the viral DNA to specifically locate and cleave the viral precursors. Mature virions have a weakened organization compared to the unmature virions, thereby facilitating subsequent uncoating. Without maturation, the particle lacks infectivity and is unable to uncoat. Late in adenovirus infection, in the cytoplasm, may participate in the cytoskeleton destruction. Cleaves host cell cytoskeletal keratins K7 and K18. The polypeptide is Protease (Galliformes (FAdV-8)).